A 90-amino-acid polypeptide reads, in one-letter code: U7-theraphotoxin-Hhn1j (90 aa).

Residues 1–19 (MKTAIFTVVLALAVFAVLS) form the signal peptide. The propeptide occupies 20–50 (FGWEANEKALSEEFTELIHEKEAASETEARE). Cystine bridges form between C51–C65, C58–C70, and C64–C81.

Belongs to the neurotoxin 10 (Hwtx-1) family. 13 (Hntx-13) subfamily. As to expression, expressed by the venom gland.

Its subcellular location is the secreted. Its function is as follows. Ion channel inhibitor. In Cyriopagopus hainanus (Chinese bird spider), this protein is U7-theraphotoxin-Hhn1j.